The following is a 193-amino-acid chain: Holliday junction branch migration complex subunit RuvA (193 aa).

Positions 1-64 (MIGRIQGTLV…EDAQQLFGFA (64 aa)) are domain I. The segment at 65–139 (TEIEREAFRQ…GKLAPDLGIT (75 aa)) is domain II. The interval 139–143 (TGGKP) is flexible linker. The interval 144–193 (QAIEATSEVLQALLSLGYSEKEALLALKQIPPETSVSDGIRMGLKYLSKP) is domain III.

Belongs to the RuvA family. In terms of assembly, homotetramer. Forms an RuvA(8)-RuvB(12)-Holliday junction (HJ) complex. HJ DNA is sandwiched between 2 RuvA tetramers; dsDNA enters through RuvA and exits via RuvB. An RuvB hexamer assembles on each DNA strand where it exits the tetramer. Each RuvB hexamer is contacted by two RuvA subunits (via domain III) on 2 adjacent RuvB subunits; this complex drives branch migration. In the full resolvosome a probable DNA-RuvA(4)-RuvB(12)-RuvC(2) complex forms which resolves the HJ.

The protein localises to the cytoplasm. Its function is as follows. The RuvA-RuvB-RuvC complex processes Holliday junction (HJ) DNA during genetic recombination and DNA repair, while the RuvA-RuvB complex plays an important role in the rescue of blocked DNA replication forks via replication fork reversal (RFR). RuvA specifically binds to HJ cruciform DNA, conferring on it an open structure. The RuvB hexamer acts as an ATP-dependent pump, pulling dsDNA into and through the RuvAB complex. HJ branch migration allows RuvC to scan DNA until it finds its consensus sequence, where it cleaves and resolves the cruciform DNA. The sequence is that of Holliday junction branch migration complex subunit RuvA from Polynucleobacter asymbioticus (strain DSM 18221 / CIP 109841 / QLW-P1DMWA-1) (Polynucleobacter necessarius subsp. asymbioticus).